The primary structure comprises 411 residues: Lissencephaly-1 homolog (411 aa).

The LisH domain maps to 9–41; that stretch reads QREELNQAIADYLGSNGYSSALEAFRKEADISG. Positions 56-83 form a coiled coil; the sequence is TSVIRLQKKVMELEAKLSEAEKEVIEGA. WD repeat units lie at residues 106 to 147, 149 to 187, 191 to 230, 233 to 272, 275 to 334, 337 to 376, and 379 to 411; these read GHRA…RSLK, HTSS…DCVK, GHDH…CVKT, GHRE…CKAE, AHDH…CLFV, GHDN…FMKT, and AHQH…WECR.

It belongs to the WD repeat LIS1/nudF family.

It is found in the cytoplasm. The protein resides in the cytoskeleton. The protein localises to the microtubule organizing center. It localises to the centrosome. Functionally, positively regulates the activity of the minus-end directed microtubule motor protein dynein. May enhance dynein-mediated microtubule sliding by targeting dynein to the microtubule plus end. Required for several dynein- and microtubule-dependent processes. The sequence is that of Lissencephaly-1 homolog from Glossina morsitans morsitans (Savannah tsetse fly).